The chain runs to 757 residues: Xaa-Pro dipeptidyl-peptidase (757 aa).

Catalysis depends on charge relay system residues serine 348, aspartate 468, and histidine 498.

This sequence belongs to the peptidase S15 family. In terms of assembly, homodimer.

It is found in the cytoplasm. It catalyses the reaction Hydrolyzes Xaa-Pro-|- bonds to release unblocked, N-terminal dipeptides from substrates including Ala-Pro-|-p-nitroanilide and (sequentially) Tyr-Pro-|-Phe-Pro-|-Gly-Pro-|-Ile.. Removes N-terminal dipeptides sequentially from polypeptides having unsubstituted N-termini provided that the penultimate residue is proline. This chain is Xaa-Pro dipeptidyl-peptidase, found in Streptococcus pneumoniae (strain P1031).